The following is a 76-amino-acid chain: Sec-independent protein translocase protein TatA (76 aa).

The helical transmembrane segment at 1-21 (MGSFSIWHWLIVLVIVALVFG) threads the bilayer. Composition is skewed to basic and acidic residues over residues 39 to 50 (FKDGMKGEDDKP) and 64 to 76 (GTVDVEVKEKSNS). Residues 39-76 (FKDGMKGEDDKPAAQNAAPSQVADKGTVDVEVKEKSNS) are disordered.

This sequence belongs to the TatA/E family. In terms of assembly, the Tat system comprises two distinct complexes: a TatABC complex, containing multiple copies of TatA, TatB and TatC subunits, and a separate TatA complex, containing only TatA subunits. Substrates initially bind to the TatABC complex, which probably triggers association of the separate TatA complex to form the active translocon.

The protein localises to the cell inner membrane. Its function is as follows. Part of the twin-arginine translocation (Tat) system that transports large folded proteins containing a characteristic twin-arginine motif in their signal peptide across membranes. TatA could form the protein-conducting channel of the Tat system. The chain is Sec-independent protein translocase protein TatA from Herminiimonas arsenicoxydans.